A 1487-amino-acid chain; its full sequence is Chromosome partition protein MukB (1487 aa).

34 to 41 (GGNGAGKS) contributes to the ATP binding site. Coiled coils occupy residues 297–426 (SSRE…LEKA), 460–666 (ALKH…RLAS), 781–806 (RAAREQRLELLRSEREEVVEKHAKAA), 836–1111 (EQAL…RTFV), and 1210–1266 (VEAI…LSNI). The interval 667-784 (PGGSNDPRLK…VIPLFGRAAR (118 aa)) is flexible hinge.

The protein belongs to the SMC family. MukB subfamily. As to quaternary structure, homodimerization via its hinge domain. Binds to DNA via its C-terminal region. Interacts, and probably forms a ternary complex, with MukE and MukF via its C-terminal region. The complex formation is stimulated by calcium or magnesium. Interacts with tubulin-related protein FtsZ.

It is found in the cytoplasm. The protein localises to the nucleoid. Functionally, plays a central role in chromosome condensation, segregation and cell cycle progression. Functions as a homodimer, which is essential for chromosome partition. Involved in negative DNA supercoiling in vivo, and by this means organize and compact chromosomes. May achieve or facilitate chromosome segregation by condensation DNA from both sides of a centrally located replisome during cell division. The sequence is that of Chromosome partition protein MukB from Vibrio vulnificus (strain YJ016).